Consider the following 527-residue polypeptide: Amine oxidase [flavin-containing] A (527 aa).

M1 is subject to N-acetylmethionine. The Cytoplasmic segment spans residues 1-497 (MERQEKANNA…RTFWERNLPS (497 aa)). S383 is subject to Phosphoserine. C406 bears the S-8alpha-FAD cysteine mark. Residues 498–518 (VTGLLKIIGFSTSVTALWLAV) traverse the membrane as a helical; Anchor for type IV membrane protein segment. Residues 519-527 (YKFRLLTRS) are Mitochondrial intermembrane-facing. The segment at 520 to 522 (KFR) is interaction with membrane phospholipid headgroups.

Belongs to the flavin monoamine oxidase family. In terms of assembly, monomer, homo- or heterodimer (containing two subunits of similar size). Each subunit contains a covalently bound flavin. Enzymatically active as monomer. FAD is required as a cofactor.

The protein localises to the mitochondrion outer membrane. It carries out the reaction a secondary aliphatic amine + O2 + H2O = a primary amine + an aldehyde + H2O2. The enzyme catalyses a primary methyl amine + O2 + H2O = an aldehyde + H2O2 + NH4(+). It catalyses the reaction (R)-adrenaline + O2 + H2O = (R)-3,4-dihydroxymandelaldehyde + methylamine + H2O2. The catalysed reaction is dopamine + O2 + H2O = 3,4-dihydroxyphenylacetaldehyde + H2O2 + NH4(+). It carries out the reaction tyramine + O2 + H2O = (4-hydroxyphenyl)acetaldehyde + H2O2 + NH4(+). The enzyme catalyses (R)-noradrenaline + O2 + H2O = (R)-3,4-dihydroxymandelaldehyde + H2O2 + NH4(+). It catalyses the reaction serotonin + O2 + H2O = (5-hydroxyindol-3-yl)acetaldehyde + H2O2 + NH4(+). The catalysed reaction is kynuramine + O2 + H2O = 3-(2-aminophenyl)-3-oxopropanal + H2O2 + NH4(+). It carries out the reaction tryptamine + O2 + H2O = indole-3-acetaldehyde + H2O2 + NH4(+). The enzyme catalyses 2-phenylethylamine + O2 + H2O = 2-phenylacetaldehyde + H2O2 + NH4(+). Functionally, catalyzes the oxidative deamination of primary and some secondary amine such as neurotransmitters, with concomitant reduction of oxygen to hydrogen peroxide and has important functions in the metabolism of neuroactive and vasoactive amines in the central nervous system and peripheral tissues. Preferentially oxidizes serotonin. Also catalyzes the oxidative deamination of kynuramine to 3-(2-aminophenyl)-3-oxopropanal that can spontaneously condense to 4-hydroxyquinoline. This is Amine oxidase [flavin-containing] A from Sus scrofa (Pig).